Here is an 89-residue protein sequence, read N- to C-terminus: Small ribosomal subunit protein uS17 (89 aa).

This sequence belongs to the universal ribosomal protein uS17 family. Part of the 30S ribosomal subunit.

One of the primary rRNA binding proteins, it binds specifically to the 5'-end of 16S ribosomal RNA. The sequence is that of Small ribosomal subunit protein uS17 from Stenotrophomonas maltophilia (strain K279a).